Consider the following 90-residue polypeptide: Probable Fe(2+)-trafficking protein (90 aa).

The protein belongs to the Fe(2+)-trafficking protein family.

In terms of biological role, could be a mediator in iron transactions between iron acquisition and iron-requiring processes, such as synthesis and/or repair of Fe-S clusters in biosynthetic enzymes. This chain is Probable Fe(2+)-trafficking protein, found in Pseudoalteromonas translucida (strain TAC 125).